Reading from the N-terminus, the 551-residue chain is Putative ABC transporter ATP-binding protein BT9727_3105 (551 aa).

2 ABC transporter domains span residues 5–243 (AEIN…FRPF) and 293–525 (LSAE…SINR). Residues 39 to 46 (GGSGSGKT) and 327 to 334 (GKNGTGKS) contribute to the ATP site.

This sequence belongs to the ABC transporter superfamily.

The protein resides in the cell membrane. Its function is as follows. Probably part of an ABC transporter complex. Responsible for energy coupling to the transport system. The protein is Putative ABC transporter ATP-binding protein BT9727_3105 of Bacillus thuringiensis subsp. konkukian (strain 97-27).